Consider the following 331-residue polypeptide: 3-dehydroquinate synthase homolog (331 aa).

It belongs to the archaeal-type DHQ synthase family.

This Persephonella marina (strain DSM 14350 / EX-H1) protein is 3-dehydroquinate synthase homolog.